We begin with the raw amino-acid sequence, 141 residues long: Nucleoside triphosphatase NudI (141 aa).

In terms of domain architecture, Nudix hydrolase spans Met-1–Leu-141. Residues Gly-38 to Gly-59 carry the Nudix box motif.

The protein belongs to the Nudix hydrolase family. NudI subfamily. In terms of assembly, monomer. The cofactor is Mg(2+).

The catalysed reaction is a ribonucleoside 5'-triphosphate + H2O = a ribonucleoside 5'-phosphate + diphosphate + H(+). It catalyses the reaction a 2'-deoxyribonucleoside 5'-triphosphate + H2O = a 2'-deoxyribonucleoside 5'-phosphate + diphosphate + H(+). The enzyme catalyses dUTP + H2O = dUMP + diphosphate + H(+). It carries out the reaction dTTP + H2O = dTMP + diphosphate + H(+). The catalysed reaction is dCTP + H2O = dCMP + diphosphate + H(+). Catalyzes the hydrolysis of nucleoside triphosphates, with a preference for pyrimidine deoxynucleoside triphosphates (dUTP, dTTP and dCTP). This Enterobacter sp. (strain 638) protein is Nucleoside triphosphatase NudI.